The primary structure comprises 117 residues: MGVIINESKSVKWEGKVEIADNFIKRAFGFMLRNPGHALIFILPFETRFNATIHGFFMLKSIDVIFLDSEKTVVDVTTLRPWRIYVPKKAAKYVIEGPVGLRKVLKVEVGDKVEWIT.

This sequence belongs to the UPF0127 family.

The polypeptide is UPF0127 protein PYRAB11210 (Pyrococcus abyssi (strain GE5 / Orsay)).